We begin with the raw amino-acid sequence, 911 residues long: Protein dead ringer (911 aa).

Disordered stretches follow at residues 1–44 (MQLR…DCDS), 67–87 (SGGG…LSHH), and 172–274 (HVTS…QNNG). Basic and acidic residues predominate over residues 19-34 (IERDSDLGDDLSHGDR). Position 30 is a phosphoserine (Ser30). Position 35 is a phosphothreonine (Thr35). Phosphoserine is present on Ser44. Low complexity predominate over residues 174 to 201 (TSSPSGGNGSSYNGGTTPTNSSNSNATT). The span at 202–231 (NGGGTAGPGGTGGSGGGGGGGGGGGGGVGG) shows a compositional bias: gly residues. Over residues 252–273 (AANSASNSSTSSEASNSSQQNN) the composition is skewed to low complexity. An ARID domain is found at 293–385 (DPKRKEFLDD…YLYPYECEKK (93 aa)). 3 disordered regions span residues 501-633 (GMPP…VGSG), 662-775 (PSMG…GKLN), and 826-877 (QSET…DQDM). Low complexity predominate over residues 512–550 (HQQQHSQQQQQQQHHHQQQQQQQSQQQHHLQQQRQRSQS). Over residues 570–600 (HNNNSPPGSAHTSPQQREALNLSDSPPNLTN) the composition is skewed to polar residues. Phosphoserine occurs at positions 592 and 594. Positions 601 to 621 (IKREREREPTPEPVDQDDKFV) are enriched in basic and acidic residues. Ser720 is subject to Phosphoserine. The 95-residue stretch at 731–825 (TTGGSVGHRH…GVLVANVPLS (95 aa)) folds into the REKLES domain. Residues 737–751 (GHRHSSPVSTKKKGG) show a composition bias toward basic residues. Residues 841–853 (TVEEEKDEEEEEE) are compositionally biased toward acidic residues. Positions 854–870 (PKAAEEESHRSPVKQEN) are enriched in basic and acidic residues.

In terms of tissue distribution, present in the pharyngeal muscles, hindgut epithelium, amnioserosa, ring gland, midgut-hindgut junction, posterior region of each brain lobe, longitudinal glial cells of the CNS and the salivary gland duct of germ-band retracted embryos.

Its subcellular location is the nucleus. Transcription factor which is a downstream target of gcm and repo. Directly or indirectly activates the transcription of locos and pros, which are essential for the development of some glial cells. Plays an essential role in defining the cell shape and migration characteristics of longitudinal glia that enable them to establish a normal axon scaffold. This Drosophila melanogaster (Fruit fly) protein is Protein dead ringer (retn).